The sequence spans 119 residues: Protein TusC (119 aa).

Belongs to the DsrF/TusC family. In terms of assembly, heterohexamer, formed by a dimer of trimers. The hexameric TusBCD complex contains 2 copies each of TusB, TusC and TusD. The TusBCD complex interacts with TusE.

It localises to the cytoplasm. Functionally, part of a sulfur-relay system required for 2-thiolation of 5-methylaminomethyl-2-thiouridine (mnm(5)s(2)U) at tRNA wobble positions. This is Protein TusC from Buchnera aphidicola subsp. Baizongia pistaciae (strain Bp).